We begin with the raw amino-acid sequence, 48 residues long: Large ribosomal subunit protein bL32 (48 aa).

This sequence belongs to the bacterial ribosomal protein bL32 family.

This chain is Large ribosomal subunit protein bL32, found in Helicobacter pylori (strain P12).